The chain runs to 148 residues: Holo-[acyl-carrier-protein] synthase (148 aa).

Asp-9 and Glu-63 together coordinate Mg(2+).

The protein belongs to the P-Pant transferase superfamily. AcpS family. Mg(2+) is required as a cofactor.

Its subcellular location is the cytoplasm. The enzyme catalyses apo-[ACP] + CoA = holo-[ACP] + adenosine 3',5'-bisphosphate + H(+). Transfers the 4'-phosphopantetheine moiety from coenzyme A to a Ser of acyl-carrier-protein. The polypeptide is Holo-[acyl-carrier-protein] synthase (Burkholderia cenocepacia (strain HI2424)).